A 148-amino-acid chain; its full sequence is Large-conductance mechanosensitive channel (148 aa).

2 helical membrane-spanning segments follow: residues 14–34 and 85–105; these read VVDMAVGIIIGAAFTTIINTL and GIFVNACISFLIVTFVMFLSV.

This sequence belongs to the MscL family. In terms of assembly, homopentamer.

Its subcellular location is the cell inner membrane. In terms of biological role, channel that opens in response to stretch forces in the membrane lipid bilayer. May participate in the regulation of osmotic pressure changes within the cell. The protein is Large-conductance mechanosensitive channel of Chlorobium phaeobacteroides (strain DSM 266 / SMG 266 / 2430).